Here is a 632-residue protein sequence, read N- to C-terminus: Dihydrolipoyllysine-residue acetyltransferase component of pyruvate dehydrogenase complex, mitochondrial (632 aa).

Residues 1–77 (MWRVCARRVQ…LLGSPSRRSY (77 aa)) constitute a mitochondrion transit peptide. Lipoyl-binding domains lie at 82-158 (HQKV…CITV) and 208-284 (HMQI…CIIV). The residue at position 91 (Ser-91) is a Phosphoserine. N6-lipoyllysine occurs at positions 123 and 249. Positions 342–379 (FVSPLAKKLAAEKGIDLTQVKGTGPEGRIIKKDIDSFV) constitute a Peripheral subunit-binding (PSBD) domain. Arg-446 is a binding site for CoA. An N6-acetyllysine modification is found at Lys-451. Lys-458 carries the post-translational modification N6-succinyllysine. Position 460 (Ser-460) interacts with CoA. Lys-532 carries the N6-succinyllysine modification. CoA is bound by residues Ser-551, Asn-552, and Gly-576. Active-site residues include His-605 and Asp-609.

It belongs to the 2-oxoacid dehydrogenase family. Part of the pyruvate dehydrogenase complex (PDHc) that is a multi-enzyme complex composed of multiple copies of three enzymes, pyruvate dehydrogenase (subunits PDH1A and PDHB, E1 component), dihydrolipoamide acetyltransferase (DLAT, E2 component), and dihydrolipoamide dehydrogenase (DLD, E3 component) to which is added an additional protein the E3-binding protein (PDHX, E3BP). In terms of structural architecture, the E2 and E3BP components assemble into a 60meric central core with icosahedral symmetry. The central core is decorated with E1 and E3 proteins. Currently, two alternative models for the E2:E3BP stoichiometry are considered as being either 48:12 (E2(48)-E3BP(12)) or 40:20 (E2(40)-E3BP(20)). Interacts with PDK2 and PDK3. Interacts with SIRT4. Interacts with PDHB. The cofactor is (R)-lipoate. Delipoylated at Lys-123 and Lys-249 by SIRT4, delipoylation decreases the PHD complex activity. Expressed in flagella of epididymal sperm.

The protein resides in the mitochondrion matrix. The enzyme catalyses N(6)-[(R)-dihydrolipoyl]-L-lysyl-[protein] + acetyl-CoA = N(6)-[(R)-S(8)-acetyldihydrolipoyl]-L-lysyl-[protein] + CoA. Its function is as follows. As part of the pyruvate dehydrogenase complex, catalyzes the transfers of an acetyl group to a lipoic acid moiety. The pyruvate dehydrogenase complex, catalyzes the overall conversion of pyruvate to acetyl-CoA and CO(2), and thereby links cytoplasmic glycolysis and the mitochondrial tricarboxylic acid (TCA) cycle. The sequence is that of Dihydrolipoyllysine-residue acetyltransferase component of pyruvate dehydrogenase complex, mitochondrial from Rattus norvegicus (Rat).